We begin with the raw amino-acid sequence, 196 residues long: MKVVILDTGCANLSSVTYAVQRLGYTPVVSREAEIVLQADKLFLPGVGTAQAAMNQLEERDLIALIKACTQPVLGICLGMQLLGTHSDESGGIPTLGIVDTPVKKMIDHGLPLPHMGWNQVIPKAGHRLFRDIDDGAYFYFVHSYAMPVCENTIAQANYGEAFTAALEKDNFFGVQFHPERSGAAGAQLLKNFLEM.

Residues 2-196 (KVVILDTGCA…AQLLKNFLEM (195 aa)) enclose the Glutamine amidotransferase type-1 domain. Cys-77 serves as the catalytic Nucleophile. Residues His-178 and Glu-180 contribute to the active site.

As to quaternary structure, heterodimer of HisH and HisF.

The protein localises to the cytoplasm. It catalyses the reaction 5-[(5-phospho-1-deoxy-D-ribulos-1-ylimino)methylamino]-1-(5-phospho-beta-D-ribosyl)imidazole-4-carboxamide + L-glutamine = D-erythro-1-(imidazol-4-yl)glycerol 3-phosphate + 5-amino-1-(5-phospho-beta-D-ribosyl)imidazole-4-carboxamide + L-glutamate + H(+). The catalysed reaction is L-glutamine + H2O = L-glutamate + NH4(+). Its pathway is amino-acid biosynthesis; L-histidine biosynthesis; L-histidine from 5-phospho-alpha-D-ribose 1-diphosphate: step 5/9. In terms of biological role, IGPS catalyzes the conversion of PRFAR and glutamine to IGP, AICAR and glutamate. The HisH subunit catalyzes the hydrolysis of glutamine to glutamate and ammonia as part of the synthesis of IGP and AICAR. The resulting ammonia molecule is channeled to the active site of HisF. The chain is Imidazole glycerol phosphate synthase subunit HisH from Pectobacterium atrosepticum (strain SCRI 1043 / ATCC BAA-672) (Erwinia carotovora subsp. atroseptica).